The following is a 394-amino-acid chain: MKPNTDFMLIADGAKVLTQGNLTEHCAIEVSDGIICGLKSTISAEWTADKPHYRLTSGTLVAGFIDTQVNGGGGLMFNHVPTLETLRLMMQAHRQFGTTAMLPTVITDDIEVMQAAADAVAEAIDCQVPGIIGIHFEGPHLSVAKRGCHPPAHLRGITEREWLLYLRQDLGVRLITLAPESVTPEQIKRLVASGAIISLGHSNADGETVLKAIEAGASGFTHLYNGMSALTSREPGMVGAAFASENTYCGIILDGQHVHPISALAAWRAKGTEHLMLVTDAMSPLGSDQTEFQFFDGKVVREGMTLRDQHGSLAGSVLDMASAVRYAATELNLGLSNAVQMATRTPAEFIQRPQLGDIAEGKQADWVWLDDDQRVLAVWIAGELLYQAEQARFA.

Residue Glu137 participates in Zn(2+) binding. Substrate is bound at residue 148 to 149 (CH). Zn(2+) contacts are provided by His201 and His222. Substrate-binding positions include 225–226 (NG), Arg233, and 254–257 (DGQH). Residue Asp280 is the Proton donor/acceptor of the active site. 313–315 (LAG) provides a ligand contact to substrate.

Belongs to the metallo-dependent hydrolases superfamily. NagA family.

It localises to the cytoplasm. The enzyme catalyses N-acetyl-D-galactosamine 6-phosphate + H2O = D-galactosamine 6-phosphate + acetate. The catalysed reaction is N-acetyl-D-glucosamine 6-phosphate + H2O = D-glucosamine 6-phosphate + acetate. Its function is as follows. Involved in the pathway of N-acetyl-D-galactosamine degradation. Catalyzes the conversion of N-acetyl-D-galactosamine 6-phosphate to D-galactosamine 6-phosphate and acetate. It can also catalyze the conversion of N-acetyl-D-glucosamine 6-phosphate. This is N-acetylgalactosamine-6-phosphate deacetylase from Shewanella sp. (strain ANA-3).